We begin with the raw amino-acid sequence, 268 residues long: Embryonic abundant protein USP92 (268 aa).

Residues 1–22 (MEFAHLTVLSLFCLAFVGITAT) form the signal peptide. A run of 5 repeats spans residues 50–55 (GKTNSL), 83–88 (GNTNSV), 101–106 (GVTDSI), 166–183 (YVVE…MCHR), and 202–222 (YVVS…VCHH). The segment at 50–106 (GKTNSLPIKSEELKQYSTLFFEHDLHPRKNFILGNTNSVGSIIRPFTKSRQGVTDSI) is 3 X 6 AA approximate repeats. The 192-residue stretch at 68-259 (LFFEHDLHPR…GNKAAAWVPN (192 aa)) folds into the BURP domain. Residues 166–222 (YVVEDVKKVGDNAVMCHRLNFEKVVFNCHQVRETTAYVVSLVASDGTKTKALTVCHH) are 2 X approximate repeats. N-linked (GlcNAc...) asparagine glycosylation occurs at Asn-259.

As to expression, seed.

The polypeptide is Embryonic abundant protein USP92 (Vicia faba (Broad bean)).